Here is a 363-residue protein sequence, read N- to C-terminus: Cytochrome P450 CYP82D47 (363 aa).

Cysteine 342 is a heme binding site.

The protein belongs to the cytochrome P450 family. It depends on heme as a cofactor.

Its function is as follows. Probable heme-thiolate monooxygenase. The protein is Cytochrome P450 CYP82D47 of Panax ginseng (Korean ginseng).